The sequence spans 590 residues: V-type ATP synthase alpha chain (590 aa).

Gly-231–Thr-238 contributes to the ATP binding site.

It belongs to the ATPase alpha/beta chains family.

It catalyses the reaction ATP + H2O + 4 H(+)(in) = ADP + phosphate + 5 H(+)(out). Functionally, produces ATP from ADP in the presence of a proton gradient across the membrane. The V-type alpha chain is a catalytic subunit. This is V-type ATP synthase alpha chain from Clostridium botulinum (strain ATCC 19397 / Type A).